The primary structure comprises 304 residues: Oxidoreductase calM (304 aa).

I26, T45, D68, and N98 together coordinate NADP(+). The Proton donor role is filled by S152. 4 residues coordinate NADP(+): Y166, K170, V200, and T202. The active-site Proton acceptor is the Y166. K170 functions as the Lowers pKa of active site Tyr in the catalytic mechanism.

Belongs to the short-chain dehydrogenases/reductases (SDR) family.

The protein operates within secondary metabolite biosynthesis. In terms of biological role, oxidoreductase; part of the gene cluster that mediates the biosynthesis of calbistrin A and related compounds. Calbistrin A is a secondary metabolite with an interesting structure that was recently found to have bioactivity against leukemia cells. It consists of two polyketides linked by an ester bond: a bicyclic decalin containing polyketide and a linear 12 carbon dioic acid structure. The polyketide synthase calA is probably responsible for forming the decalin moiety. Because calA lacks a designated enoylreductase (ER) domain, the required activity is provided by the trans-enoyl reductase calK. Following release from the PKS, calF then probably catalyzes the oxidation and the subsequent Diels Alder cycloisomerization that lead to the formation of the decalin moiety. The decalin polyketide backbone includes two C-methyl groups, at C7 and C11 in backbone, of which the C7 position is probably methylated by the methyltransferase domain of calA. A candidate for adding the methyl group at C11, if not done by CalA, is the cluster methyltransferase calH. Several additional tailoring enzymes within the cluster could be involved in the modification of the decalin polyketide product. Those include the 3 cytochrome P450 monooxygenases CalE, CalG and CalL, of which one might be responsible for the introduction of the extra hydroxyl group attached to the backbone of the decalin moiety, at position C9 in the backbone, that allows for attachment of the linear moiety. One tailoring enzyme activity that is expected to be involved in biosynthesis of calbistrin is an acyltransferase for connecting the two polyketide synthase products, and which could be performed by the cluster acyltransferase calJ. The enzyme responsible for the biosynthesis of the linear moiety, probably a second PKS, has not been identified yet. This chain is Oxidoreductase calM, found in Penicillium decumbens.